A 490-amino-acid polypeptide reads, in one-letter code: GTPase Der (490 aa).

EngA-type G domains lie at phenylalanine 3–glutamate 167 and leucine 203–asparagine 378. GTP contacts are provided by residues glycine 9–serine 16, aspartate 56–leucine 60, asparagine 119–glutamate 122, glycine 209–serine 216, aspartate 256–methionine 260, and asparagine 321–aspartate 324. One can recognise a KH-like domain in the interval arginine 379 to alanine 465. Residues proline 451–glycine 490 are disordered. A compositionally biased stretch (basic residues) spans lysine 469–glycine 484.

It belongs to the TRAFAC class TrmE-Era-EngA-EngB-Septin-like GTPase superfamily. EngA (Der) GTPase family. As to quaternary structure, associates with the 50S ribosomal subunit.

Functionally, GTPase that plays an essential role in the late steps of ribosome biogenesis. The polypeptide is GTPase Der (Dinoroseobacter shibae (strain DSM 16493 / NCIMB 14021 / DFL 12)).